Consider the following 48-residue polypeptide: MAVPKRRVSKTRAAKRRTHYKVTLPMPIKDKDGSYKMPHRVNPVTKEY.

Residues 24-48 (LPMPIKDKDGSYKMPHRVNPVTKEY) are disordered.

This sequence belongs to the bacterial ribosomal protein bL32 family.

The sequence is that of Large ribosomal subunit protein bL32 from Campylobacter lari (strain RM2100 / D67 / ATCC BAA-1060).